The primary structure comprises 166 residues: Large ribosomal subunit protein uL10 (166 aa).

It belongs to the universal ribosomal protein uL10 family. In terms of assembly, part of the ribosomal stalk of the 50S ribosomal subunit. The N-terminus interacts with L11 and the large rRNA to form the base of the stalk. The C-terminus forms an elongated spine to which L12 dimers bind in a sequential fashion forming a multimeric L10(L12)X complex.

Forms part of the ribosomal stalk, playing a central role in the interaction of the ribosome with GTP-bound translation factors. The sequence is that of Large ribosomal subunit protein uL10 from Pseudomonas fluorescens (strain SBW25).